Consider the following 246-residue polypeptide: Carboxy-S-adenosyl-L-methionine synthase (246 aa).

Residues tyrosine 39, 64–66 (GCS), 89–90 (DN), 121–122 (DI), asparagine 136, and arginine 203 contribute to the S-adenosyl-L-methionine site.

Belongs to the class I-like SAM-binding methyltransferase superfamily. Cx-SAM synthase family. As to quaternary structure, homodimer.

The enzyme catalyses prephenate + S-adenosyl-L-methionine = carboxy-S-adenosyl-L-methionine + 3-phenylpyruvate + H2O. In terms of biological role, catalyzes the conversion of S-adenosyl-L-methionine (SAM) to carboxy-S-adenosyl-L-methionine (Cx-SAM). The chain is Carboxy-S-adenosyl-L-methionine synthase from Pseudomonas aeruginosa (strain UCBPP-PA14).